The sequence spans 467 residues: Regulatory protein NPR6 (467 aa).

The BTB domain maps to 27-111 (SDVTFSVEGR…LYSGQVSIVP (85 aa)). Residues 117–131 (RSNCGDRGCWHTHCT) form a C2HC NPR-type zinc finger. The Zn(2+) site is built by C120, C125, H127, and C130. ANK repeat units follow at residues 247–276 (QKIRRMRRALDSSDVELVKLMVMGEGLNLD), 277–306 (ESLALIYAVENCSREVVKALLELGAADVNY), 311–340 (TGKTALHIAAEMVSPDMVAVLLDHHADPNV), and 344–378 (DGITPLDILRTLTSDFLFKGAIPGLTHIEPNKLRL). A disordered region spans residues 434 to 467 (RDIGDDNSNQREGMNLHHHHHDPSTMYHHHHHHF). Residues 449 to 467 (LHHHHHDPSTMYHHHHHHF) show a composition bias toward basic residues.

The protein belongs to the plant 'ANKYRIN-BTB/POZ' family. 'NOOT-BOP-COCH-like' (NBCL) subfamily. In terms of assembly, homodimer or heterodimer with BOP2. Interacts with PAN.

Its subcellular location is the cytoplasm. It is found in the nucleus. It participates in protein modification; protein ubiquitination. Functionally, may act as a substrate-specific adapter of an E3 ubiquitin-protein ligase complex (CUL3-RBX1-BTB) which mediates the ubiquitination and subsequent proteasomal degradation of target proteins. Acts redundantly with BOP2. BOP1/2 promote leaf and floral meristem fate and determinacy in a pathway targeting AP1 and AGL24. BOP1/2 act as transcriptional co-regulators through direct interaction with TGA factors, including PAN, a direct regulator of AP1. Controls lateral organ fate through positive regulation of adaxial-abaxial polarity genes ATHB-14/PHB, YAB1/FIL and YAB3, and through positive regulation of LOB domain-containing genes LOB, LBD6/AS2 and LBD36. Promotes and maintains a developmentally determinate state in leaf cells through the negative regulation of JAG, JGL and class I KNOX genes. Is also involved in nectary development, formation of normal abscission zones (AZs) and suppression of bract formation, probably by regulating the cell wall disorganization. The protein is Regulatory protein NPR6 of Arabidopsis thaliana (Mouse-ear cress).